A 202-amino-acid polypeptide reads, in one-letter code: FMN reductase (NADH) RutF 1 (202 aa).

Positions 168–202 (PRTPRSGSAPAEPARAPRAVGARPAEGPALALRSA) are disordered. Over residues 171–196 (PRSGSAPAEPARAPRAVGARPAEGPA) the composition is skewed to low complexity.

The protein belongs to the non-flavoprotein flavin reductase family. RutF subfamily.

The catalysed reaction is FMNH2 + NAD(+) = FMN + NADH + 2 H(+). Its function is as follows. Catalyzes the reduction of FMN to FMNH2 which is used to reduce pyrimidine by RutA via the Rut pathway. The protein is FMN reductase (NADH) RutF 1 of Methylorubrum extorquens (strain PA1) (Methylobacterium extorquens).